Consider the following 173-residue polypeptide: Eggshell protein (173 aa).

The N-terminal stretch at 1–18 (MKQSLTLVFLVAIGYATA) is a signal peptide. Positions 145-162 (GSGKGKGGGKGGKGGKGG) are enriched in gly residues. The segment at 145–173 (GSGKGKGGGKGGKGGKGGTYKPSHYGGGY) is disordered.

This is Eggshell protein from Schistosoma mansoni (Blood fluke).